The sequence spans 89 residues: DNA/RNA-binding protein Alba (89 aa).

It belongs to the histone-like Alba family.

It localises to the cytoplasm. Its subcellular location is the chromosome. In terms of biological role, binds double-stranded DNA tightly but without sequence specificity. Involved in DNA compaction. The protein is DNA/RNA-binding protein Alba of Methanococcus maripaludis (strain DSM 14266 / JCM 13030 / NBRC 101832 / S2 / LL).